The following is a 777-amino-acid chain: Endonuclease MutS2 (777 aa).

328-335 (GPNTGGKT) contributes to the ATP binding site. The region spanning 702–777 (LDIRGMNTLE…GDGATEVYLK (76 aa)) is the Smr domain.

The protein belongs to the DNA mismatch repair MutS family. MutS2 subfamily. As to quaternary structure, homodimer. Binds to stalled ribosomes, contacting rRNA.

Endonuclease that is involved in the suppression of homologous recombination and thus may have a key role in the control of bacterial genetic diversity. Its function is as follows. Acts as a ribosome collision sensor, splitting the ribosome into its 2 subunits. Detects stalled/collided 70S ribosomes which it binds and splits by an ATP-hydrolysis driven conformational change. Acts upstream of the ribosome quality control system (RQC), a ribosome-associated complex that mediates the extraction of incompletely synthesized nascent chains from stalled ribosomes and their subsequent degradation. Probably generates substrates for RQC. This is Endonuclease MutS2 from Carboxydothermus hydrogenoformans (strain ATCC BAA-161 / DSM 6008 / Z-2901).